Here is a 590-residue protein sequence, read N- to C-terminus: Aspartate--tRNA(Asp/Asn) ligase (590 aa).

Residue Glu-175 coordinates L-aspartate. The interval 199–202 is aspartate; it reads QQYK. L-aspartate-binding residues include Arg-221 and His-450. An ATP-binding site is contributed by 221–223; it reads RDE. An ATP-binding site is contributed by Glu-484. Arg-491 provides a ligand contact to L-aspartate. Residue 536-539 coordinates ATP; the sequence is GVDR.

Belongs to the class-II aminoacyl-tRNA synthetase family. Type 1 subfamily. Homodimer.

The protein localises to the cytoplasm. It carries out the reaction tRNA(Asx) + L-aspartate + ATP = L-aspartyl-tRNA(Asx) + AMP + diphosphate. Functionally, aspartyl-tRNA synthetase with relaxed tRNA specificity since it is able to aspartylate not only its cognate tRNA(Asp) but also tRNA(Asn). Reaction proceeds in two steps: L-aspartate is first activated by ATP to form Asp-AMP and then transferred to the acceptor end of tRNA(Asp/Asn). The polypeptide is Aspartate--tRNA(Asp/Asn) ligase (Bradyrhizobium sp. (strain ORS 278)).